Here is a 552-residue protein sequence, read N- to C-terminus: Glucose-6-phosphate isomerase (552 aa).

Glutamate 357 acts as the Proton donor in catalysis. Residues histidine 388 and lysine 516 contribute to the active site. A disordered region spans residues 525-552; the sequence is ELASTKPPKHDSSTNALIERYRTRGCRS.

The protein belongs to the GPI family.

It localises to the cytoplasm. The enzyme catalyses alpha-D-glucose 6-phosphate = beta-D-fructose 6-phosphate. The protein operates within carbohydrate biosynthesis; gluconeogenesis. It functions in the pathway carbohydrate degradation; glycolysis; D-glyceraldehyde 3-phosphate and glycerone phosphate from D-glucose: step 2/4. In terms of biological role, catalyzes the reversible isomerization of glucose-6-phosphate to fructose-6-phosphate. The chain is Glucose-6-phosphate isomerase from Laribacter hongkongensis (strain HLHK9).